A 123-amino-acid chain; its full sequence is Holo-[acyl-carrier-protein] synthase (123 aa).

Residues D8 and E55 each contribute to the Mg(2+) site.

Belongs to the P-Pant transferase superfamily. AcpS family. The cofactor is Mg(2+).

The protein localises to the cytoplasm. It carries out the reaction apo-[ACP] + CoA = holo-[ACP] + adenosine 3',5'-bisphosphate + H(+). Its function is as follows. Transfers the 4'-phosphopantetheine moiety from coenzyme A to a Ser of acyl-carrier-protein. The polypeptide is Holo-[acyl-carrier-protein] synthase (Caldicellulosiruptor saccharolyticus (strain ATCC 43494 / DSM 8903 / Tp8T 6331)).